The following is a 512-amino-acid chain: Chromatin assembly factor 1 subunit B (512 aa).

WD repeat units lie at residues 16–56 (DDHT…SSTK), 65–105 (RHTQ…TTLA), 126–165 (SMGSEIYDLCWSVDSNFLIAGAMDNSLRLYDAHTGQLLTQ), and 168–207 (DHSHYVQGVCWDPLNQYIVSESSDRSICLYEIQEEKKNPK). Polar residues predominate over residues 239–257 (DESSGISEPIETSNNNESP). Positions 239–261 (DESSGISEPIETSNNNESPVSKH) are disordered. WD repeat units follow at residues 373–413 (SFSN…PFYR) and 417–458 (LHYS…VKSQ). The interval 459–512 (HKISLPEKRSASPSSIDDSQDNTAGGPATTTLIPRKVESSKVSKKRIAPTPVYP) is disordered. Phosphoserine occurs at positions 468, 470, and 473. The span at 469–490 (ASPSSIDDSQDNTAGGPATTTL) shows a compositional bias: polar residues.

This sequence belongs to the WD repeat HIR1 family. Component of chromatin assembly factor 1 (CAF-1), composed of pcf1, pcf2 and pcf3. Interacts with pcn1/PCNA during S-phase. Interacts with swi6 at the G1/S-phase transition and early S-phase, but not in the G2 phase. The CAF-1 complex interacts with histone H3-H4 dimers.

The protein localises to the cytoplasm. Its subcellular location is the nucleus. Functionally, acts as a component of the histone chaperone complex chromatin assembly factor 1 (CAF-1), which assembles histone octamers onto DNA during replication and repair. CAF-1 performs the first step of the nucleosome assembly process, bringing newly synthesized histones H3 and H4 to replicating DNA; histones H2A/H2B can bind to this chromatin precursor subsequent to DNA replication to complete the histone octamer. Plays a role in the maintenance of heterochromatin. In Schizosaccharomyces pombe (strain 972 / ATCC 24843) (Fission yeast), this protein is Chromatin assembly factor 1 subunit B.